The sequence spans 1087 residues: Exportin-7 (1087 aa).

Position 2 is an N-acetylalanine (Ala-2). Residues 30–96 (AEKALVEFTN…RNYVLNYLAT (67 aa)) form the Importin N-terminal domain. Phosphoserine is present on Ser-570.

The protein belongs to the exportin family. In terms of assembly, binds to nucleoporins. Found in a complex with XPO7, EIF4A1, ARHGAP1, VPS26A, VPS29, VPS35 and SFN. Interacts with ARHGAP1 and SFN. Interacts with Ran and cargo proteins in a GTP-dependent manner. Highly expressed in testis and spleen, moderate in kidney and liver and low in heart, brain, lung and skeletal muscle.

The protein resides in the cytoplasm. It localises to the nucleus. In terms of biological role, mediates the nuclear export of proteins (cargos) with broad substrate specificity. In the nucleus binds cooperatively to its cargo and to the GTPase Ran in its active GTP-bound form. Docking of this trimeric complex to the nuclear pore complex (NPC) is mediated through binding to nucleoporins. Upon transit of a nuclear export complex into the cytoplasm, disassembling of the complex and hydrolysis of Ran-GTP to Ran-GDP (induced by RANBP1 and RANGAP1, respectively) cause release of the cargo from the export receptor. XPO7 then return to the nuclear compartment and mediate another round of transport. The directionality of nuclear export is thought to be conferred by an asymmetric distribution of the GTP- and GDP-bound forms of Ran between the cytoplasm and nucleus. The sequence is that of Exportin-7 (Xpo7) from Mus musculus (Mouse).